Here is a 1288-residue protein sequence, read N- to C-terminus: Contactin-associated protein-like 3 (1288 aa).

A signal peptide spans 1 to 25 (MASVAWAVLKVLLLLPTQTWSPVGA). Residues 26-1245 (GNPPDCDAPL…LVNADRRDSA (1220 aa)) are Extracellular-facing. In terms of domain architecture, F5/8 type C spans 31–177 (CDAPLASALP…IGMRIEVYGC (147 aa)). An intrachain disulfide couples Cys31 to Cys177. 2 Laminin G-like domains span residues 183–364 (VVYF…SFSC) and 370–545 (VPVT…IDSC). N-linked (GlcNAc...) asparagine glycosylation is found at Asn285, Asn359, Asn441, and Asn497. Cysteines 332 and 364 form a disulfide. 4 disulfide bridges follow: Cys513–Cys545, Cys551–Cys562, Cys556–Cys571, and Cys573–Cys583. The EGF-like 1 domain occupies 551-583 (CLPSYCEHGGECSQSWDTFSCDCLGTGYTGETC). The Fibrinogen C-terminal domain maps to 584–792 (HSSLYEQSCE…LLCRGDQSFW (209 aa)). Residues Asn623 and Asn706 are each glycosylated (N-linked (GlcNAc...) asparagine). In terms of domain architecture, Laminin G-like 3 spans 793–958 (NSASFNTETS…TVTPGVEPGC (166 aa)). Cystine bridges form between Cys931–Cys958, Cys962–Cys975, Cys969–Cys984, and Cys986–Cys996. Positions 962–996 (CSTYGHLCRNGGRCREKRRGVTCDCAFSAYDGPFC) constitute an EGF-like 2 domain. In terms of domain architecture, Laminin G-like 4 spans 1015–1203 (QEHYTLSENS…RGHVAPMARC (189 aa)). 3 N-linked (GlcNAc...) asparagine glycosylation sites follow: Asn1023, Asn1073, and Asn1120. Cys1167 and Cys1203 are oxidised to a cystine. The interval 1215 to 1236 (ELAPRLAGGAGRSGPADEGEPL) is disordered. Residues 1246–1266 (VIGGVIAVVIFILLCITAIAI) traverse the membrane as a helical segment. The Cytoplasmic portion of the chain corresponds to 1267 to 1288 (RIYQQRKLRKENESKVSKKEEC).

This sequence belongs to the neurexin family.

The protein localises to the cell membrane. Its subcellular location is the secreted. The protein is Contactin-associated protein-like 3 (CNTNAP3) of Homo sapiens (Human).